The sequence spans 206 residues: Enterobactin synthase component D (206 aa).

The Mg(2+) site is built by D107, E109, and E152.

This sequence belongs to the P-Pant transferase superfamily. EntD family. EntB, EntD, EntE, and EntF form a multienzyme complex called enterobactin synthase. It depends on Mg(2+) as a cofactor.

It is found in the membrane. The catalysed reaction is apo-[aryl-carrier protein] + CoA = holo-[aryl-carrier protein] + adenosine 3',5'-bisphosphate + H(+). It carries out the reaction apo-[peptidyl-carrier protein] + CoA = holo-[peptidyl-carrier protein] + adenosine 3',5'-bisphosphate + H(+). The protein operates within siderophore biosynthesis; enterobactin biosynthesis. Functionally, involved in the biosynthesis of the siderophore enterobactin (enterochelin), which is a macrocyclic trimeric lactone of N-(2,3-dihydroxybenzoyl)-serine. The serine trilactone serves as a scaffolding for the three catechol functionalities that provide hexadentate coordination for the tightly ligated iron(2+) atoms. Plays an essential role in the assembly of the enterobactin by catalyzing the transfer of the 4'-phosphopantetheine (Ppant) moiety from coenzyme A to the apo-domains of both EntB (ArCP domain) and EntF (PCP domain) to yield their holo-forms which make them competent for the activation of 2,3-dihydroxybenzoate (DHB) and L-serine, respectively. The chain is Enterobactin synthase component D from Escherichia coli O157:H7.